Consider the following 950-residue polypeptide: Oxysterol-binding protein-related protein 1 (950 aa).

An interaction with RAB7A region spans residues 1-237 (MNTEAEQQLL…NKVVHKALKR (237 aa)). 3 ANK repeats span residues 47–76 (LGWT…KVNM), 80–109 (MGDT…DTTV), and 175–204 (LGNT…DPSL). The PH domain occupies 235-334 (LKRFEGPLWK…WLEAIEEHSA (100 aa)). Residues 430–463 (NFKLEQEQEKNKILSEALETLATEHHELERSLVE) are a coiled coil. An FFAT motif is present at residues 469–483 (SILSEDEFYDALSGS). Disordered regions lie at residues 795-821 (KKNT…VPDS) and 881-913 (MENG…SEED). A coiled-coil region spans residues 877-913 (DIRAMENGEIDQASEEKKRLEEKQRAARKNRSKSEED). Residues 890–901 (SEEKKRLEEKQR) are compositionally biased toward basic and acidic residues.

The protein belongs to the OSBP family. Interacts (via FFAT motif) with VAPA. Interacts (via FFAT motif) with VAPB. Interacts with the GTP-bound form of RAB7A. Interacts with OAS1B. Interacts (via FFAT motif) with MOSPD2 (via MSP domain). In terms of tissue distribution, detected in prostate and liver.

It is found in the late endosome. Functionally, binds phospholipids; exhibits strong binding to phosphatidic acid and weak binding to phosphatidylinositol 3-phosphate. Stabilizes GTP-bound RAB7A on late endosomes/lysosomes and alters functional properties of late endocytic compartments via its interaction with RAB7A. Binds 25-hydroxycholesterol and cholesterol. This is Oxysterol-binding protein-related protein 1 from Rattus norvegicus (Rat).